The following is a 93-amino-acid chain: Large ribosomal subunit protein bL31 (93 aa).

Residues 68-93 form a disordered region; sequence GSADAAADEKKPDAKNNNKDNTSKED. A compositionally biased stretch (basic and acidic residues) spans 74–93; it reads ADEKKPDAKNNNKDNTSKED.

Belongs to the bacterial ribosomal protein bL31 family. Type A subfamily. As to quaternary structure, part of the 50S ribosomal subunit.

In terms of biological role, binds the 23S rRNA. The polypeptide is Large ribosomal subunit protein bL31 (Prochlorococcus marinus (strain MIT 9313)).